A 478-amino-acid chain; its full sequence is Phosphatidylinositol 4-kinase type 2-alpha (478 aa).

Met-1 bears the N-acetylmethionine mark. Residues 1–57 (MDETSPLVSPERAQPPEYTFPSVSGAHFPQVPGGAVRVAAAGSGPSPPCSPGHDRER) form a disordered region. Ser-5, Ser-9, Ser-43, Ser-46, and Ser-50 each carry phosphoserine. The segment covering 31-44 (VPGGAVRVAAAGSG) has biased composition (low complexity). A PI3K/PI4K catalytic domain is found at 123–452 (SIYPERIYQG…VQMPPVIVET (330 aa)). The interval 129–135 (IYQGSSG) is G-loop. ATP contacts are provided by residues 130 to 136 (YQGSSGS) and Lys-151. The interval 156-158 (EPY) is important for substrate binding. The segment at 164-177 (KWTKWLQKLCCPCC) is important for interaction with membranes. S-palmitoyl cysteine attachment occurs at residues Cys-173, Cys-174, Cys-176, and Cys-177. An ATP-binding site is contributed by 260 to 263 (QLFV). An important for interaction with membranes region spans residues 267–275 (KDADYWLRR). The interval 304–312 (RNTDRGNDN) is catalytic loop. The interval 343–363 (AIDNGLAFPLKHPDSWRAYPF) is activation loop. Position 345 (Asp-345) interacts with ATP. Residues 358–367 (WRAYPFYWAW) form an important for interaction with membranes region. The residue at position 461 (Ser-461) is a Phosphoserine.

This sequence belongs to the PI3/PI4-kinase family. Type II PI4K subfamily. In terms of assembly, associates with the BLOC-1 and the AP-3 complexes; the BLOC-1 complex is required for optimal binding of PI4K2A to the AP-3 complex. Interacts with BLOC1S5 and DTNBP1. Interacts with FOS; this interaction may enhance phosphatidylinositol phosphorylation activity. Interacts with ITCH. Interacts with ATG9A. Post-translationally, ubiquitinated by ITCH; this does not lead to proteasomal degradation. In terms of processing, palmitoylated. Palmitoylated by ZDHHC3 and ZDHHC7 in the CCPCC motif. Palmitoylation is cholesterol-dependent, and required for TGN localization. In terms of tissue distribution, detected in adult brain, especially in neurons in the cerebellum, brain cortex, dorsal root ganglion and spinal cord (at protein level).

It localises to the golgi apparatus. The protein localises to the trans-Golgi network membrane. Its subcellular location is the membrane raft. It is found in the endosome. The protein resides in the endosome membrane. It localises to the cytoplasmic vesicle. The protein localises to the cell projection. Its subcellular location is the dendrite. It is found in the presynaptic cell membrane. The protein resides in the synapse. It localises to the synaptosome. The protein localises to the mitochondrion. Its subcellular location is the membrane. It is found in the cell membrane. The protein resides in the perikaryon. It localises to the neuron projection. It catalyses the reaction a 1,2-diacyl-sn-glycero-3-phospho-(1D-myo-inositol) + ATP = a 1,2-diacyl-sn-glycero-3-phospho-(1D-myo-inositol 4-phosphate) + ADP + H(+). Functionally, membrane-bound phosphatidylinositol-4 kinase (PI4-kinase) that catalyzes the phosphorylation of phosphatidylinositol (PI) to phosphatidylinositol 4-phosphate (PI4P), a lipid that plays important roles in endocytosis, Golgi function, protein sorting and membrane trafficking and is required for prolonged survival of neurons. Besides, phosphorylation of phosphatidylinositol (PI) to phosphatidylinositol 4-phosphate (PI4P) is the first committed step in the generation of phosphatidylinositol 4,5-bisphosphate (PIP2), a precursor of the second messenger inositol 1,4,5-trisphosphate (InsP3). The polypeptide is Phosphatidylinositol 4-kinase type 2-alpha (Pi4k2a) (Rattus norvegicus (Rat)).